The chain runs to 1132 residues: NUT family member 1 (1132 aa).

Disordered stretches follow at residues 1–56, 337–365, 383–405, 476–584, 693–714, 873–892, and 922–1017; these read MASD…SVFS, AASK…EIPP, LATG…EGMY, EEED…VERR, RGTP…GERD, DASS…NSFS, and PLNV…DEEL. The segment covering 21-36 has biased composition (pro residues); it reads APSPSPALPFLPPTSD. Basic residues predominate over residues 337–352; it reads AASKTRAPRRRQRKAQ. The span at 395–404 shows a compositional bias: acidic residues; that stretch reads EGQQQEEEGM. 3 stretches are compositionally biased toward polar residues: residues 487–497, 697–706, and 883–892; these read SGAQLDSSPSG, MAQSYDQNPS, and EAGSRGNSFS. Basic and acidic residues predominate over residues 932 to 942; sequence GEGRVDPDLSK. Positions 950 to 971 are enriched in polar residues; the sequence is QESQESYTTGTPKATSSHQGLG. Phosphoserine occurs at positions 1026, 1029, and 1031. The tract at residues 1031–1132 is disordered; sequence SPREHPLSPH…GRRKKRRRSQ (102 aa). An N5-methylglutamine modification is found at Gln-1046. Residues 1123–1132 show a composition bias toward basic residues; that stretch reads GRRKKRRRSQ.

The protein belongs to the NUT family. In terms of processing, methylated at Gln-1046 by N6AMT1. Post-translationally, phosphorylation on Ser-1026, Ser-1029 or Ser-1031 is important for cytoplasmic export. Specifically expressed in testis.

The protein resides in the cytoplasm. It is found in the nucleus. Functionally, plays a role in the regulation of proliferation. Regulates TERT expression by modulating SP1 binding to TERT promoter binding sites. This Homo sapiens (Human) protein is NUT family member 1.